Reading from the N-terminus, the 288-residue chain is 4-diphosphocytidyl-2-C-methyl-D-erythritol kinase (288 aa).

The active site involves Lys8. Pro90–Ser100 contributes to the ATP binding site. The active site involves Asp132.

It belongs to the GHMP kinase family. IspE subfamily.

It catalyses the reaction 4-CDP-2-C-methyl-D-erythritol + ATP = 4-CDP-2-C-methyl-D-erythritol 2-phosphate + ADP + H(+). It functions in the pathway isoprenoid biosynthesis; isopentenyl diphosphate biosynthesis via DXP pathway; isopentenyl diphosphate from 1-deoxy-D-xylulose 5-phosphate: step 3/6. In terms of biological role, catalyzes the phosphorylation of the position 2 hydroxy group of 4-diphosphocytidyl-2C-methyl-D-erythritol. This chain is 4-diphosphocytidyl-2-C-methyl-D-erythritol kinase, found in Chlamydia trachomatis serovar L2b (strain UCH-1/proctitis).